Reading from the N-terminus, the 108-residue chain is Replication restart protein PriB (108 aa).

An SSB domain is found at 8 to 108; the sequence is IDNSFSVMGV…LHAEQIEFID (101 aa).

It belongs to the PriB family. As to quaternary structure, homodimer. Interacts with PriA and DnaT. Component of the replication restart primosome. Primosome assembly occurs via a 'hand-off' mechanism. PriA binds to replication forks, subsequently PriB then DnaT bind; DnaT then displaces ssDNA to generate the helicase loading substrate.

In terms of biological role, involved in the restart of stalled replication forks, which reloads the replicative helicase on sites other than the origin of replication; the PriA-PriB pathway is the major replication restart pathway. During primosome assembly it facilitates complex formation between PriA and DnaT on DNA; stabilizes PriA on DNA. Stimulates the DNA unwinding activity of PriA helicase. This Haemophilus influenzae (strain ATCC 51907 / DSM 11121 / KW20 / Rd) protein is Replication restart protein PriB.